Reading from the N-terminus, the 68-residue chain is Copper transport protein ATOX1 (68 aa).

In terms of domain architecture, HMA spans 1–63 (MPKHEFSVDM…TLNKTGKAVS (63 aa)). Cu cation-binding residues include cysteine 12 and cysteine 15. Serine 47 bears the Phosphoserine mark. N6-acetyllysine is present on lysine 60.

This sequence belongs to the ATX1 family. As to quaternary structure, homodimer. Interacts with ATP7B. Interacts with ATP7A. Interacts (via dimer form) with SLC31A1 (via C-terminal domain); this interaction improves ATOX1 stability and controls intracellular Cu(I) levels.

Binds and deliver cytosolic copper to the copper ATPase proteins. May be important in cellular antioxidant defense. The chain is Copper transport protein ATOX1 from Mus musculus (Mouse).